The sequence spans 311 residues: Formimidoylglutamase (311 aa).

Residues H130, D155, H157, D159, C242, and D244 each coordinate Mn(2+).

Belongs to the arginase family. Mn(2+) serves as cofactor.

It catalyses the reaction N-formimidoyl-L-glutamate + H2O = formamide + L-glutamate. The protein operates within amino-acid degradation; L-histidine degradation into L-glutamate; L-glutamate from N-formimidoyl-L-glutamate (hydrolase route): step 1/1. Its function is as follows. Catalyzes the conversion of N-formimidoyl-L-glutamate to L-glutamate and formamide. The protein is Formimidoylglutamase of Staphylococcus aureus (strain MRSA252).